The following is a 217-amino-acid chain: Twisted gastrulation protein homolog 1-A (217 aa).

An N-terminal signal peptide occupies residues 1–26 (MRPALFLCPVLISVLFLLSSLSLISG). N-linked (GlcNAc...) asparagine glycosylation is found at asparagine 53 and asparagine 147.

Belongs to the twisted gastrulation protein family.

It is found in the secreted. Involved in dorsal-ventral patterning. Appears to function predominantly as a ventralizing factor, through its actions as a BMP signaling agonist, acting through both chd-dependent and chd-independent mechanisms. May also antagonize BMP signaling, probably via formation of ternary complexes with chd and BMPs, resulting in dorsalization. The chain is Twisted gastrulation protein homolog 1-A (twsg1a) from Danio rerio (Zebrafish).